The following is a 156-amino-acid chain: Deoxyuridine 5'-triphosphate nucleotidohydrolase (156 aa).

It belongs to the dCTP deaminase family. Archaeal dUTPase subfamily. In terms of assembly, homotrimer.

The catalysed reaction is dUTP + H2O = dUMP + diphosphate + H(+). It participates in pyrimidine metabolism; dUMP biosynthesis; dUMP from dCTP (dUTP route): step 2/2. In terms of biological role, this enzyme is involved in nucleotide metabolism: it produces dUMP, the immediate precursor of thymidine nucleotides and it decreases the intracellular concentration of dUTP so that uracil cannot be incorporated into DNA. This chain is Deoxyuridine 5'-triphosphate nucleotidohydrolase, found in Methanocaldococcus jannaschii (strain ATCC 43067 / DSM 2661 / JAL-1 / JCM 10045 / NBRC 100440) (Methanococcus jannaschii).